Here is a 328-residue protein sequence, read N- to C-terminus: Delta(3,5)-Delta(2,4)-dienoyl-CoA isomerase, mitochondrial (328 aa).

Residues 1–26 (MAAGIVASRRLRDLLTRRLTASNYPG) constitute a mitochondrion transit peptide. Residues 116 to 120 (AGVDL) and Gly174 each bind substrate. Position 231 is an N6-succinyllysine (Lys231). Ser268 carries the post-translational modification Phosphoserine. Positions 326 to 328 (SKL) match the Microbody targeting signal motif. Lys327 is subject to N6-acetyllysine.

Belongs to the enoyl-CoA hydratase/isomerase family. In terms of assembly, homohexamer.

The protein resides in the mitochondrion. The protein localises to the peroxisome. It catalyses the reaction (3E,5Z)-octadienoyl-CoA = (2E,4E)-octadienoyl-CoA. It carries out the reaction (3E,5Z,8Z,11Z,14Z)-eicosapentaenoyl-CoA = (2E,4E,8Z,11Z,14Z)-eicosapentaenoyl-CoA. Its pathway is lipid metabolism; fatty acid beta-oxidation. Functionally, isomerization of 3-trans,5-cis-dienoyl-CoA to 2-trans,4-trans-dienoyl-CoA. This is Delta(3,5)-Delta(2,4)-dienoyl-CoA isomerase, mitochondrial (ECH1) from Pongo abelii (Sumatran orangutan).